We begin with the raw amino-acid sequence, 119 residues long: Large ribosomal subunit protein uL18 (119 aa).

The protein belongs to the universal ribosomal protein uL18 family. As to quaternary structure, part of the 50S ribosomal subunit; part of the 5S rRNA/L5/L18/L25 subcomplex. Contacts the 5S and 23S rRNAs.

Functionally, this is one of the proteins that bind and probably mediate the attachment of the 5S RNA into the large ribosomal subunit, where it forms part of the central protuberance. The chain is Large ribosomal subunit protein uL18 from Cereibacter sphaeroides (strain ATCC 17029 / ATH 2.4.9) (Rhodobacter sphaeroides).